A 773-amino-acid polypeptide reads, in one-letter code: ATP-dependent RNA helicase MAK5 (773 aa).

The segment covering 73 to 82 has biased composition (basic and acidic residues); that stretch reads KDSNKEKVGD. Disordered regions lie at residues 73–99 and 114–144; these read KDSN…ESEL and SAAS…VDED. The segment covering 83–99 has biased composition (acidic residues); it reads DQESVENESGSDSESEL. The residue at position 135 (Thr135) is a Phosphothreonine. Residue Ser138 is modified to Phosphoserine. Residues 171–199 carry the Q motif motif; sequence EWTNLAPLSMTILQSLQNLNFLRPTEIQK. The Helicase ATP-binding domain maps to 202–399; the sequence is IPVIMQGVDV…SSSRQVKDRR (198 aa). 215-222 is a binding site for ATP; sequence ASTGSGKT. A DEAD box motif is present at residues 333–336; sequence DEAD. The 164-residue stretch at 452 to 615 folds into the Helicase C-terminal domain; sequence DLYCYYFLTM…STDLNSRSTN (164 aa). Ser678 is modified (phosphoserine).

It belongs to the DEAD box helicase family. DDX24/MAK5 subfamily.

Its subcellular location is the nucleus. The protein resides in the nucleolus. The enzyme catalyses ATP + H2O = ADP + phosphate + H(+). In terms of biological role, ATP-binding RNA helicase involved in the biogenesis of 60S ribosomal subunits and is required for the normal formation of 25S and 5.8S rRNAs. Required for the maintenance of dsRNA killer plasmid. This Saccharomyces cerevisiae (strain ATCC 204508 / S288c) (Baker's yeast) protein is ATP-dependent RNA helicase MAK5 (MAK5).